The primary structure comprises 357 residues: MANAPIRLLIAASGTGGHLFPAIALAEKLPDYQIEWLGVPNRLETQLVPKEYPLNTIAVEGFQQGFGLSSIRIFGKLAGSIIEVRRILKQGNFQGVFTTGGYIAGPAVIAARSLGLPVVFHESNALPGKVTRFFGPWCSAVALGFEVAAKYLPRAKNVCVGTPVRGQFLDGAINSPLDLAIPDGVPLIVVFGGSQGAVAVNKLVRESAKAWFDAGAYVVHLTGDRDPEADSLKHPQYIALPFYNNMAALLQRATLAISRSGAGSLTELAVCGTPAILIPYPFAAEDHQSYNADVFTSSGAALTLKQSELTAQILQSNVLNLLQSPQELAKMGENAHAIAVPDSAEKLAQLVREVVET.

UDP-N-acetyl-alpha-D-glucosamine is bound by residues 15–17, N124, R165, S194, and Q288; that span reads TGG.

It belongs to the glycosyltransferase 28 family. MurG subfamily.

The protein localises to the cell inner membrane. The enzyme catalyses di-trans,octa-cis-undecaprenyl diphospho-N-acetyl-alpha-D-muramoyl-L-alanyl-D-glutamyl-meso-2,6-diaminopimeloyl-D-alanyl-D-alanine + UDP-N-acetyl-alpha-D-glucosamine = di-trans,octa-cis-undecaprenyl diphospho-[N-acetyl-alpha-D-glucosaminyl-(1-&gt;4)]-N-acetyl-alpha-D-muramoyl-L-alanyl-D-glutamyl-meso-2,6-diaminopimeloyl-D-alanyl-D-alanine + UDP + H(+). It participates in cell wall biogenesis; peptidoglycan biosynthesis. Its function is as follows. Cell wall formation. Catalyzes the transfer of a GlcNAc subunit on undecaprenyl-pyrophosphoryl-MurNAc-pentapeptide (lipid intermediate I) to form undecaprenyl-pyrophosphoryl-MurNAc-(pentapeptide)GlcNAc (lipid intermediate II). In Nostoc punctiforme (strain ATCC 29133 / PCC 73102), this protein is UDP-N-acetylglucosamine--N-acetylmuramyl-(pentapeptide) pyrophosphoryl-undecaprenol N-acetylglucosamine transferase.